Consider the following 349-residue polypeptide: uncharacterized protein (349 aa).

The first 29 residues, M1–S29, serve as a signal peptide directing secretion.

This is an uncharacterized protein from Borreliella burgdorferi (strain ATCC 35210 / DSM 4680 / CIP 102532 / B31) (Borrelia burgdorferi).